The following is a 393-amino-acid chain: Na(+)/H(+) antiporter NhaA (393 aa).

A run of 11 helical transmembrane segments spans residues 18 to 38 (AGGV…NSPW), 65 to 85 (MLIW…GLEI), 101 to 121 (MLPA…YAAI), 131 to 151 (GWGI…VLLG), 160 to 180 (VFLT…IAFF), 184 to 204 (NLSP…LGLN), 210 to 230 (AVGP…KSGI), 260 to 280 (ALQP…NAGV), 298 to 318 (IAFG…WLLI), 334 to 354 (FFGV…IGSL), and 369 to 389 (IGVL…LLAS).

It belongs to the NhaA Na(+)/H(+) (TC 2.A.33) antiporter family.

The protein localises to the cell inner membrane. The enzyme catalyses Na(+)(in) + 2 H(+)(out) = Na(+)(out) + 2 H(+)(in). Functionally, na(+)/H(+) antiporter that extrudes sodium in exchange for external protons. The sequence is that of Na(+)/H(+) antiporter NhaA from Albidiferax ferrireducens (strain ATCC BAA-621 / DSM 15236 / T118) (Rhodoferax ferrireducens).